The chain runs to 596 residues: Arginine--tRNA ligase (596 aa).

The 'HIGH' region signature appears at 139–149 (ANPTGPLHVGH).

This sequence belongs to the class-I aminoacyl-tRNA synthetase family. Monomer.

Its subcellular location is the cytoplasm. It carries out the reaction tRNA(Arg) + L-arginine + ATP = L-arginyl-tRNA(Arg) + AMP + diphosphate. The protein is Arginine--tRNA ligase of Paraburkholderia phytofirmans (strain DSM 17436 / LMG 22146 / PsJN) (Burkholderia phytofirmans).